A 321-amino-acid polypeptide reads, in one-letter code: Lipoyl synthase (321 aa).

Positions 68, 73, 79, 94, 98, 101, and 308 each coordinate [4Fe-4S] cluster. The Radical SAM core domain occupies 80 to 297 (FNHGTATFMI…KAEAMAMGFT (218 aa)).

Belongs to the radical SAM superfamily. Lipoyl synthase family. The cofactor is [4Fe-4S] cluster.

Its subcellular location is the cytoplasm. The enzyme catalyses [[Fe-S] cluster scaffold protein carrying a second [4Fe-4S](2+) cluster] + N(6)-octanoyl-L-lysyl-[protein] + 2 oxidized [2Fe-2S]-[ferredoxin] + 2 S-adenosyl-L-methionine + 4 H(+) = [[Fe-S] cluster scaffold protein] + N(6)-[(R)-dihydrolipoyl]-L-lysyl-[protein] + 4 Fe(3+) + 2 hydrogen sulfide + 2 5'-deoxyadenosine + 2 L-methionine + 2 reduced [2Fe-2S]-[ferredoxin]. It participates in protein modification; protein lipoylation via endogenous pathway; protein N(6)-(lipoyl)lysine from octanoyl-[acyl-carrier-protein]: step 2/2. Functionally, catalyzes the radical-mediated insertion of two sulfur atoms into the C-6 and C-8 positions of the octanoyl moiety bound to the lipoyl domains of lipoate-dependent enzymes, thereby converting the octanoylated domains into lipoylated derivatives. The sequence is that of Lipoyl synthase from Yersinia enterocolitica serotype O:8 / biotype 1B (strain NCTC 13174 / 8081).